The primary structure comprises 115 residues: Phosphoribosyl-AMP cyclohydrolase (115 aa).

Asp-80 contributes to the Mg(2+) binding site. Cys-81 contributes to the Zn(2+) binding site. 2 residues coordinate Mg(2+): Asp-82 and Asp-84. Residues Cys-97 and Cys-104 each contribute to the Zn(2+) site.

This sequence belongs to the PRA-CH family. As to quaternary structure, homodimer. It depends on Mg(2+) as a cofactor. Zn(2+) is required as a cofactor.

Its subcellular location is the cytoplasm. It catalyses the reaction 1-(5-phospho-beta-D-ribosyl)-5'-AMP + H2O = 1-(5-phospho-beta-D-ribosyl)-5-[(5-phospho-beta-D-ribosylamino)methylideneamino]imidazole-4-carboxamide. The protein operates within amino-acid biosynthesis; L-histidine biosynthesis; L-histidine from 5-phospho-alpha-D-ribose 1-diphosphate: step 3/9. Catalyzes the hydrolysis of the adenine ring of phosphoribosyl-AMP. The chain is Phosphoribosyl-AMP cyclohydrolase from Mycobacterium leprae (strain Br4923).